A 129-amino-acid polypeptide reads, in one-letter code: Small ribosomal subunit protein uS11 (129 aa).

It belongs to the universal ribosomal protein uS11 family. Part of the 30S ribosomal subunit. Interacts with proteins S7 and S18. Binds to IF-3.

In terms of biological role, located on the platform of the 30S subunit, it bridges several disparate RNA helices of the 16S rRNA. Forms part of the Shine-Dalgarno cleft in the 70S ribosome. This is Small ribosomal subunit protein uS11 from Maridesulfovibrio salexigens (strain ATCC 14822 / DSM 2638 / NCIMB 8403 / VKM B-1763) (Desulfovibrio salexigens).